Here is a 230-residue protein sequence, read N- to C-terminus: Octanoyltransferase (230 aa).

A BPL/LPL catalytic domain is found at 38-215 (AGGADTLLLL…AVCAALDGVL (178 aa)). Residues 76-83 (RGGKITWH), 145-147 (AIG), and 158-160 (GFA) contribute to the substrate site. Cysteine 176 functions as the Acyl-thioester intermediate in the catalytic mechanism.

Belongs to the LipB family.

It is found in the cytoplasm. The enzyme catalyses octanoyl-[ACP] + L-lysyl-[protein] = N(6)-octanoyl-L-lysyl-[protein] + holo-[ACP] + H(+). It participates in protein modification; protein lipoylation via endogenous pathway; protein N(6)-(lipoyl)lysine from octanoyl-[acyl-carrier-protein]: step 1/2. Catalyzes the transfer of endogenously produced octanoic acid from octanoyl-acyl-carrier-protein onto the lipoyl domains of lipoate-dependent enzymes. Lipoyl-ACP can also act as a substrate although octanoyl-ACP is likely to be the physiological substrate. This Mycobacterium bovis (strain BCG / Tokyo 172 / ATCC 35737 / TMC 1019) protein is Octanoyltransferase.